The primary structure comprises 308 residues: UPF0282 protein YG5714_2245 (308 aa).

It belongs to the UPF0282 family.

This chain is UPF0282 protein YG5714_2245, found in Saccharolobus islandicus (strain Y.G.57.14 / Yellowstone #1) (Sulfolobus islandicus).